A 195-amino-acid polypeptide reads, in one-letter code: Common pilus major fimbrillin subunit EcpA (195 aa).

The first 22 residues, 1–22 (MKKKVLAIALVTVFTGTGVAQA), serve as a signal peptide directing secretion.

The protein belongs to the EcpA/MatB fimbrillin family. In terms of assembly, self-associates. Forms filaments. Interacts with EcpD.

It is found in the fimbrium. Its function is as follows. Part of the ecpRABCDE operon, which encodes the E.coli common pilus (ECP). ECP is found in both commensal and pathogenic strains and plays a dual role in early-stage biofilm development and host cell recognition. Major subunit of the fimbria. This Escherichia coli O127:H6 (strain E2348/69 / EPEC) protein is Common pilus major fimbrillin subunit EcpA (ecpA).